The sequence spans 298 residues: UDP-N-acetylenolpyruvoylglucosamine reductase (298 aa).

The 166-residue stretch at 26–191 (KTGGPADWLA…LDATFALEPG (166 aa)) folds into the FAD-binding PCMH-type domain. Arginine 170 is a catalytic residue. Serine 220 serves as the catalytic Proton donor. Residue glutamate 290 is part of the active site.

The protein belongs to the MurB family. FAD is required as a cofactor.

The protein resides in the cytoplasm. It carries out the reaction UDP-N-acetyl-alpha-D-muramate + NADP(+) = UDP-N-acetyl-3-O-(1-carboxyvinyl)-alpha-D-glucosamine + NADPH + H(+). Its pathway is cell wall biogenesis; peptidoglycan biosynthesis. Functionally, cell wall formation. This chain is UDP-N-acetylenolpyruvoylglucosamine reductase, found in Limosilactobacillus reuteri subsp. reuteri (strain JCM 1112) (Lactobacillus reuteri).